A 251-amino-acid chain; its full sequence is Cell division protein ZapD (251 aa).

Belongs to the ZapD family. Interacts with FtsZ.

The protein resides in the cytoplasm. Functionally, cell division factor that enhances FtsZ-ring assembly. Directly interacts with FtsZ and promotes bundling of FtsZ protofilaments, with a reduction in FtsZ GTPase activity. This Janthinobacterium sp. (strain Marseille) (Minibacterium massiliensis) protein is Cell division protein ZapD.